Consider the following 61-residue polypeptide: Small ribosomal subunit protein uS14 (61 aa).

4 residues coordinate Zn(2+): Cys24, Cys27, Cys40, and Cys43.

This sequence belongs to the universal ribosomal protein uS14 family. Zinc-binding uS14 subfamily. As to quaternary structure, part of the 30S ribosomal subunit. Contacts proteins S3 and S10. Zn(2+) serves as cofactor.

Binds 16S rRNA, required for the assembly of 30S particles and may also be responsible for determining the conformation of the 16S rRNA at the A site. In Bacillus anthracis (strain A0248), this protein is Small ribosomal subunit protein uS14.